The sequence spans 299 residues: Ribosomal RNA small subunit methyltransferase H (299 aa).

S-adenosyl-L-methionine-binding positions include 24–26, D43, F68, D90, and Q97; that span reads GGH.

This sequence belongs to the methyltransferase superfamily. RsmH family.

It is found in the cytoplasm. The enzyme catalyses cytidine(1402) in 16S rRNA + S-adenosyl-L-methionine = N(4)-methylcytidine(1402) in 16S rRNA + S-adenosyl-L-homocysteine + H(+). Functionally, specifically methylates the N4 position of cytidine in position 1402 (C1402) of 16S rRNA. The chain is Ribosomal RNA small subunit methyltransferase H from Francisella tularensis subsp. tularensis (strain WY96-3418).